A 53-amino-acid chain; its full sequence is uncharacterized protein (53 aa).

It localises to the plastid. Its subcellular location is the chloroplast. This is an uncharacterized protein from Guillardia theta (Cryptophyte).